A 571-amino-acid polypeptide reads, in one-letter code: Cytosolic Fe-S cluster assembly factor NAR1 (571 aa).

Cys-20, Cys-62, Cys-65, Cys-68, Cys-204, and Cys-259 together coordinate [4Fe-4S] cluster. Residues 415–437 are disordered; that stretch reads AKPSRMPGGKPIGSARRPNGKAS. Residues Cys-449 and Cys-453 each contribute to the [4Fe-4S] cluster site.

The protein belongs to the NARF family.

In terms of biological role, component of the cytosolic Fe/S protein assembly machinery. Required for maturation of extramitochondrial Fe/S proteins. May play a role in the transfer of pre-assembled Fe/S clusters to target apoproteins. The polypeptide is Cytosolic Fe-S cluster assembly factor NAR1 (NAR1) (Sclerotinia sclerotiorum (strain ATCC 18683 / 1980 / Ss-1) (White mold)).